Reading from the N-terminus, the 101-residue chain is MDKSKQPFRKSKRSFRRRLPPIGSGDQIDYRNMSLISRFLSEQGKILSRRTNRLTLKQQRLITIAIKQARILSLLPFRNNEKQLERVESIPRTTGPRTKNK.

The span at 1 to 19 shows a compositional bias: basic residues; that stretch reads MDKSKQPFRKSKRSFRRRL. Positions 1–26 are disordered; the sequence is MDKSKQPFRKSKRSFRRRLPPIGSGD.

This sequence belongs to the bacterial ribosomal protein bS18 family. Part of the 30S ribosomal subunit.

Its subcellular location is the plastid. It is found in the chloroplast. The chain is Small ribosomal subunit protein bS18c from Phalaenopsis aphrodite subsp. formosana (Moth orchid).